The following is a 106-amino-acid chain: 3-phenylpropionate/cinnamic acid dioxygenase ferredoxin subunit (106 aa).

Positions 4–99 (IYACPVADVP…VHVEGGDIFI (96 aa)) constitute a Rieske domain. Residues Cys42, His44, Cys62, and His65 each coordinate [2Fe-2S] cluster.

This sequence belongs to the bacterial ring-hydroxylating dioxygenase ferredoxin component family. In terms of assembly, this dioxygenase system consists of four proteins: the two subunits of the hydroxylase component (HcaE and HcaF), a ferredoxin (HcaC) and a ferredoxin reductase (HcaD). [2Fe-2S] cluster is required as a cofactor.

It participates in aromatic compound metabolism; 3-phenylpropanoate degradation. In terms of biological role, part of the multicomponent 3-phenylpropionate dioxygenase, that converts 3-phenylpropionic acid (PP) and cinnamic acid (CI) into 3-phenylpropionate-dihydrodiol (PP-dihydrodiol) and cinnamic acid-dihydrodiol (CI-dihydrodiol), respectively. This protein seems to be a 2Fe-2S ferredoxin. The protein is 3-phenylpropionate/cinnamic acid dioxygenase ferredoxin subunit of Escherichia coli O139:H28 (strain E24377A / ETEC).